The primary structure comprises 306 residues: Proline-rich transmembrane protein 1 (306 aa).

A disordered region spans residues 1–142 (MSSEKSGLPD…PPPAPAQTAQ (142 aa)). The Cytoplasmic segment spans residues 1-223 (MSSEKSGLPD…LEPRRPPHDY (223 aa)). The segment covering 15-36 (TSPPPYNAPQPPAEPPAPPPQA) has biased composition (pro residues). Residues 40–49 (SHHHHHHHYH) show a composition bias toward basic residues. 2 stretches are compositionally biased toward pro residues: residues 87-111 (HAPPGPAAGAPPPGCATLPRMPPDP) and 121-137 (PLPPPPPAAAAPPPPAP). The chain crosses the membrane as a helical span at residues 224–244 (MPIAVLTTICCFWPTGIIAIF). Over 245–275 (KAVQVRTALARGDMVSAEIASREARNFSFIS) the chain is Extracellular. Positions 276-296 (LAVGIAAMVLCTILTVVIIIA) form an intramembrane region, helical. The Extracellular segment spans residues 297 to 306 (AQHHENYWDP).

Belongs to the CD225/Dispanin family. In terms of assembly, component of the outer core of AMPAR complex. AMPAR complex consists of an inner core made of 4 pore-forming GluA/GRIA proteins (GRIA1, GRIA2, GRIA3 and GRIA4) and 4 major auxiliary subunits arranged in a twofold symmetry. One of the two pairs of distinct binding sites is occupied either by CNIH2, CNIH3 or CACNG2, CACNG3. The other harbors CACNG2, CACNG3, CACNG4, CACNG8 or GSG1L. This inner core of AMPAR complex is complemented by outer core constituents binding directly to the GluA/GRIA proteins at sites distinct from the interaction sites of the inner core constituents. Outer core constituents include at least PRRT1, PRRT2, CKAMP44/SHISA9, FRRS1L and NRN1. The proteins of the inner and outer core serve as a platform for other, more peripherally associated AMPAR constituents. Alone or in combination, these auxiliary subunits control the gating and pharmacology of the AMPAR complex and profoundly impact their biogenesis and protein processing.

It localises to the cell membrane. The protein localises to the synapse. Functionally, required to maintain a pool of extrasynaptic AMPA-regulated glutamate receptors (AMPAR) which is necessary for synapse development and function. Regulates basal AMPAR function and synaptic transmission during development but is dispensable at mature hippocampal synapses. Plays a role in regulating basal phosphorylation levels of glutamate receptor GRIA1 and promotes GRIA1 and GRIA2 cell surface expression. The sequence is that of Proline-rich transmembrane protein 1 from Homo sapiens (Human).